A 268-amino-acid chain; its full sequence is Tryptophan synthase alpha chain (268 aa).

Catalysis depends on proton acceptor residues glutamate 49 and aspartate 60.

It belongs to the TrpA family. As to quaternary structure, tetramer of two alpha and two beta chains.

The enzyme catalyses (1S,2R)-1-C-(indol-3-yl)glycerol 3-phosphate + L-serine = D-glyceraldehyde 3-phosphate + L-tryptophan + H2O. Its pathway is amino-acid biosynthesis; L-tryptophan biosynthesis; L-tryptophan from chorismate: step 5/5. Functionally, the alpha subunit is responsible for the aldol cleavage of indoleglycerol phosphate to indole and glyceraldehyde 3-phosphate. The protein is Tryptophan synthase alpha chain of Escherichia coli O157:H7.